Consider the following 325-residue polypeptide: Pyruvate dehydrogenase E1 component subunit beta (325 aa).

Glu-60 is a thiamine diphosphate binding site.

Heterodimer of an alpha and a beta chain. Thiamine diphosphate serves as cofactor.

It carries out the reaction N(6)-[(R)-lipoyl]-L-lysyl-[protein] + pyruvate + H(+) = N(6)-[(R)-S(8)-acetyldihydrolipoyl]-L-lysyl-[protein] + CO2. In terms of biological role, the pyruvate dehydrogenase complex catalyzes the overall conversion of pyruvate to acetyl-CoA and CO(2). It contains multiple copies of three enzymatic components: pyruvate dehydrogenase (E1), dihydrolipoamide acetyltransferase (E2) and lipoamide dehydrogenase (E3). This chain is Pyruvate dehydrogenase E1 component subunit beta (pdhB), found in Staphylococcus epidermidis (strain ATCC 35984 / DSM 28319 / BCRC 17069 / CCUG 31568 / BM 3577 / RP62A).